Consider the following 265-residue polypeptide: Small ribosomal subunit protein uS3 (265 aa).

Residues 43 to 111 enclose the KH type-2 domain; it reads IRTMLKTSLD…QIQLNILEVK (69 aa). The disordered stretch occupies residues 217–265; that stretch reads AREQANQKSSRPERRNDRSDGRTGDRRTNAPRTAPAAEAAPVAAAGVEA. Over residues 226 to 244 the composition is skewed to basic and acidic residues; that stretch reads SRPERRNDRSDGRTGDRRT. A compositionally biased stretch (low complexity) spans 250–265; it reads APAAEAAPVAAAGVEA.

This sequence belongs to the universal ribosomal protein uS3 family. Part of the 30S ribosomal subunit. Forms a tight complex with proteins S10 and S14.

Binds the lower part of the 30S subunit head. Binds mRNA in the 70S ribosome, positioning it for translation. The protein is Small ribosomal subunit protein uS3 of Clavibacter michiganensis subsp. michiganensis (strain NCPPB 382).